Reading from the N-terminus, the 39-residue chain is Photosystem II reaction center protein Y (39 aa).

Residues 4–22 (TLVVFAPIIAALAWVIFNI) form a helical membrane-spanning segment.

It belongs to the PsbY family. As to quaternary structure, PSII is composed of 1 copy each of membrane proteins PsbA, PsbB, PsbC, PsbD, PsbE, PsbF, PsbH, PsbI, PsbJ, PsbK, PsbL, PsbM, PsbT, PsbX, PsbY, Psb30/Ycf12, peripheral proteins PsbO, CyanoQ (PsbQ), PsbU, PsbV and a large number of cofactors. It forms dimeric complexes.

Its subcellular location is the cellular thylakoid membrane. Functionally, loosely associated component of the core of photosystem II (PSII), it is not always seen in crystals. PSII is a light-driven water plastoquinone oxidoreductase, using light energy to abstract electrons from H(2)O, generating a proton gradient subsequently used for ATP formation. This chain is Photosystem II reaction center protein Y, found in Prochlorococcus marinus (strain MIT 9515).